The primary structure comprises 107 residues: Circadian clock oscillator protein KaiB (107 aa).

This sequence belongs to the KaiB family. In terms of assembly, may undergo a major conformational rearrangment; in the free state forms homooligomers. When bound to KaiC switches to a monomeric thioredoxin-fold (KaiB(fs)). The active oscillator complex is probably KaiC(6):KaiB(6).

In terms of biological role, component of the KaiBC clock protein complex, which constitutes the main circadian regulator in cyanobacteria; it may modify the ATPase activity of KaiC. Functionally, may be a metamorphic protein which reversibly switches between an inactive tetrameric fold and a rare, thioredoxin-like monomeric fold (KaiB(fs)). KaiB(fs) binds phospho-KaiC, and perhaps clock output effectors. In Prochlorococcus marinus (strain NATL2A), this protein is Circadian clock oscillator protein KaiB.